Here is a 538-residue protein sequence, read N- to C-terminus: Nucleolar protein 12 (538 aa).

5 disordered regions span residues 1–25 (MGKK…LPFL), 41–203 (KSAG…KSNR), 336–378 (ETDP…ASTR), 433–455 (AKKL…LGEG), and 476–538 (KAEG…KMAK). Residues 63–92 (PEDDVEKEEDDEEISELEEDLQSEDEDMQD) show a composition bias toward acidic residues. The stretch at 64–156 (EDDVEKEEDD…KAKRQKVEEG (93 aa)) forms a coiled coil. Basic and acidic residues-rich tracts occupy residues 127-144 (TYMR…EKRR), 151-173 (QKVE…GRDE), and 182-202 (TVPR…EKSN). RRM domains lie at 203–315 (RTVF…SVAH) and 323–435 (RCVF…RAKK). Positions 502 to 521 (IKIKTKSRGSKGKPKNRSAK) are enriched in basic residues.

This sequence belongs to the RRM RBM34 family.

The protein resides in the nucleus. The protein localises to the nucleolus. In terms of biological role, involved in pre-25S rRNA processing. The sequence is that of Nucleolar protein 12 (nop12) from Aspergillus fumigatus (strain ATCC MYA-4609 / CBS 101355 / FGSC A1100 / Af293) (Neosartorya fumigata).